The sequence spans 117 residues: Acylphosphatase (117 aa).

In terms of domain architecture, Acylphosphatase-like spans 21–107 (RWRFRIRGLV…TGADWFEIRP (87 aa)). Active-site residues include arginine 36 and asparagine 54.

It belongs to the acylphosphatase family.

The enzyme catalyses an acyl phosphate + H2O = a carboxylate + phosphate + H(+). The chain is Acylphosphatase (acyP) from Synechococcus sp. (strain RCC307).